We begin with the raw amino-acid sequence, 493 residues long: Putative glycerol-3-phosphate transporter 5 (493 aa).

12 consecutive transmembrane segments (helical) span residues 25–44 (FTFHQILVLIITFTAYASFH), 83–103 (LGELDLAFLSSYALGMYFAGH), 113–133 (FLVFGMMGSGILTLVFGLGYW), 145–165 (VQIVCGLFQSIGWPCVVSVVG), 185–205 (SVGNILGSVIASSVLDFGWGW), 207–227 (FVLPGVLVLVSGVVVFMFLVV), 292–312 (FCLFFSKLVAYTFLYWLPYYL), 328–348 (GILSTVFDVGGVLGGISAGFI), 352–372 (IKARALTSITFLALSIPALIM), 375–395 (VYGSVSMFINIVLMFISGLLV), 428–448 (AIIDGTGSVGAALGPLLAGYI), and 452–472 (GWNSVFFMLIVSIFFAGLFLV).

The protein belongs to the major facilitator superfamily. Organophosphate:Pi antiporter (OPA) (TC 2.A.1.4) family.

The protein localises to the membrane. The chain is Putative glycerol-3-phosphate transporter 5 from Arabidopsis thaliana (Mouse-ear cress).